A 235-amino-acid polypeptide reads, in one-letter code: uncharacterized protein (235 aa).

Residues 37–235 (QNAKLNDGDN…GGEDYPWPWN (199 aa)) form a disordered region. Residues 72 to 89 (GSDDYSDVEDGGAEEGDS) show a composition bias toward acidic residues. Low complexity predominate over residues 112–124 (TSSTSTASTSSGS). The segment covering 152 to 170 (RRPELDLSPKIENRSDSSS) has biased composition (basic and acidic residues). Polar residues predominate over residues 185–202 (NKDNPSRGQGNENPSASD).

Belongs to the herpesviridae BKRF4 family.

This is an uncharacterized protein from Alcelaphine herpesvirus 1 (strain C500) (AlHV-1).